The following is a 254-amino-acid chain: Large ribosomal subunit protein uL15m (254 aa).

A mitochondrion-targeting transit peptide spans 1 to 78; the sequence is MFNILSRVCR…GSGQRRGRRI (78 aa). A disordered region spans residues 44–104; sequence NYQSKKRVGR…KVGHSTGHLK (61 aa). Residues 64-79 show a composition bias toward basic residues; that stretch reads GRGHKGSGQRRGRRIK.

This sequence belongs to the universal ribosomal protein uL15 family. As to quaternary structure, component of the mitochondrial large ribosomal subunit (mt-LSU). Mature yeast 74S mitochondrial ribosomes consist of a small (37S) and a large (54S) subunit. The 37S small subunit contains a 15S ribosomal RNA (15S mt-rRNA) and at least 32 different proteins. The 54S large subunit contains a 21S rRNA (21S mt-rRNA) and at least 45 different proteins.

The protein localises to the mitochondrion. Component of the mitochondrial ribosome (mitoribosome), a dedicated translation machinery responsible for the synthesis of mitochondrial genome-encoded proteins, including at least some of the essential transmembrane subunits of the mitochondrial respiratory chain. The mitoribosomes are attached to the mitochondrial inner membrane and translation products are cotranslationally integrated into the membrane. This Schizosaccharomyces pombe (strain 972 / ATCC 24843) (Fission yeast) protein is Large ribosomal subunit protein uL15m (mrpl10).